The following is a 238-amino-acid chain: Lactate utilization protein A (238 aa).

It belongs to the LutA/YkgE family.

Functionally, is involved in L-lactate degradation and allows cells to grow with lactate as the sole carbon source. This chain is Lactate utilization protein A, found in Anoxybacillus flavithermus (strain DSM 21510 / WK1).